Here is a 479-residue protein sequence, read N- to C-terminus: MSLVLKKSIDDATVRDKKVLIRVDFNVPVKNGKITNDFRIRSALPTIQKVLKEGGSCILMSHLGRPKGARMSDPSPEKGVRGYEEAATLRPVAARISELLGQKVEFAPDCLDAASYASKLKNADVLLLENVRFYAEEGSKKEEERDAMAKVLASYGDVYVSDAFGTAHRDSATMTGIPKVLGAGYAGYLMEKEINYFSRVLNNPPRPLVAIVGGAKVSDKIQLLDNMLGRINYLVIGGAMAYTFQKAQGRKIGISMCEEDKLDLAKSLLKKAQERNVQVFLPVDHVCNKEFKAADSPLVTESVDVPDGYMALDIGPRTIHMYEEVIGRCKSAIWNGPMGVFEMPCYSKGTFAVAKAMGTGTQKNGLMSIIGGGDSASAAELSGEAKNMSHVSTGGGASLELLEGKTLPGVAILTDKDVKERGASCKFAFGVGSPSREACPLRCGHIFGGASIVREIVKIVVALLIGIFIGRRMSTKLIR.

(2R)-3-phosphoglycerate contacts are provided by valine 23, aspartate 24, phenylalanine 25, asparagine 26, arginine 39, serine 61, histidine 62, glycine 64, arginine 65, arginine 132, histidine 168, and arginine 169. Residues glycine 214 and alanine 215 each contribute to the ADP site. Glycine 214 provides a ligand contact to CDP. AMP-binding residues include alanine 215 and lysine 216. Residue alanine 215 participates in ATP binding. Alanine 215 serves as a coordination point for Mg(2+). (2R)-3-phosphoglycerate is bound at residue lysine 216. Aspartate 219 contacts CDP. Aspartate 219 provides a ligand contact to Mg(2+). Residues lysine 220 and glycine 238 each contribute to the ADP site. Lysine 220 contributes to the AMP binding site. Position 220 (lysine 220) interacts with ATP. A CDP-binding site is contributed by glycine 238. The AMP site is built by alanine 239 and alanine 311. ATP contacts are provided by alanine 239 and alanine 311. 2 residues coordinate ADP: alanine 311 and asparagine 335. Residues glycine 336 and phenylalanine 341 each contribute to the CDP site. The ADP site is built by phenylalanine 341, glutamate 342, aspartate 374, and serine 375. Glutamate 342 contributes to the AMP binding site. Glutamate 342, aspartate 374, and serine 375 together coordinate ATP. A Mg(2+)-binding site is contributed by aspartate 374.

This sequence belongs to the phosphoglycerate kinase family. As to quaternary structure, monomer. Requires Mg(2+) as cofactor.

The protein resides in the glycosome. The catalysed reaction is (2R)-3-phosphoglycerate + ATP = (2R)-3-phospho-glyceroyl phosphate + ADP. It functions in the pathway carbohydrate degradation; glycolysis; pyruvate from D-glyceraldehyde 3-phosphate: step 2/5. In Leishmania major, this protein is Phosphoglycerate kinase, glycosomal (PGKC).